A 291-amino-acid polypeptide reads, in one-letter code: Tryptophan synthase alpha chain (291 aa).

Active-site proton acceptor residues include E69 and D80.

Belongs to the TrpA family. Tetramer of two alpha and two beta chains.

The enzyme catalyses (1S,2R)-1-C-(indol-3-yl)glycerol 3-phosphate + L-serine = D-glyceraldehyde 3-phosphate + L-tryptophan + H2O. It functions in the pathway amino-acid biosynthesis; L-tryptophan biosynthesis; L-tryptophan from chorismate: step 5/5. Functionally, the alpha subunit is responsible for the aldol cleavage of indoleglycerol phosphate to indole and glyceraldehyde 3-phosphate. This is Tryptophan synthase alpha chain from Bifidobacterium longum (strain NCC 2705).